Here is a 387-residue protein sequence, read N- to C-terminus: MPTRKSNTYLSLVNSYLIDSPQPSSINYWWNLGSLLGLCLVIQIASGVFLAMHYSSNIELAFDSVEHIMRDVNAGWLIRYIHANGASFFFICMYLHIGKALYYGSYKQPRVMLWVIGVVIFILTMAIAFMGYCLVYGQMSHWGATVITNLLSAIPFIGNDIVPFIWGGFSVSNPTIQRFFALHFLLPFILAALVCMHLMALHVHGSSNPVGITGNIDRLPMHPYFIFKDLITVFVFLLIFSLFVFYSPNTLGHPDNYIPGNPMVTPPSIVPEWYLLPFYAILRSIPDKLGGVIAMFGAILILLSLPYTDRSIIRGNSFKVLSKLAFYLFVFNFILLGNLGQLHVEVPYIQLGQFATAYYFAHYIIVVPVISTLENILYYIGTQTRVK.

Residues 32 to 52 (LGSLLGLCLVIQIASGVFLAM) form a helical membrane-spanning segment. His-82 and His-96 together coordinate heme b. A run of 8 helical transmembrane segments spans residues 85 to 105 (GASF…YYGS), 116 to 136 (IGVV…CLVY), 151 to 171 (LSAI…GFSV), 179 to 199 (FFAL…MHLM), 225 to 245 (FIFK…LFVF), 289 to 309 (LGGV…PYTD), 324 to 344 (LAFY…QLHV), and 350 to 370 (QLGQ…VPVI). Positions 183 and 197 each coordinate heme b.

It belongs to the cytochrome b family. As to quaternary structure, component of the ubiquinol-cytochrome c oxidoreductase (cytochrome b-c1 complex, complex III, CIII), a multisubunit enzyme composed of 10 subunits. The complex is composed of 3 respiratory subunits cytochrome b (COB), cytochrome c1 (CYT1) and Rieske protein (RIP1), 2 core protein subunits COR1 and QCR2, and 5 low-molecular weight protein subunits QCR6, QCR7, QCR8, QCR9 and QCR10. The complex exists as an obligatory dimer and forms supercomplexes (SCs) in the inner mitochondrial membrane with a monomer or a dimer of cytochrome c oxidase (complex IV, CIV), resulting in 2 different assemblies (supercomplexes III(2)IV and III(2)IV(2)). The cofactor is heme b.

It localises to the mitochondrion inner membrane. Component of the ubiquinol-cytochrome c oxidoreductase, a multisubunit transmembrane complex that is part of the mitochondrial electron transport chain which drives oxidative phosphorylation. The complex plays an important role in the uptake of multiple carbon sources present in different host niches. This is Cytochrome b from Candida albicans (strain SC5314 / ATCC MYA-2876) (Yeast).